The primary structure comprises 209 residues: Thiamine-phosphate synthase (209 aa).

4-amino-2-methyl-5-(diphosphooxymethyl)pyrimidine is bound by residues 41–45 (QLREK) and Asn-73. Mg(2+) contacts are provided by Asp-74 and Asp-93. Position 112 (Ser-112) interacts with 4-amino-2-methyl-5-(diphosphooxymethyl)pyrimidine. 2-[(2R,5Z)-2-carboxy-4-methylthiazol-5(2H)-ylidene]ethyl phosphate is bound at residue 138 to 140 (TGT). Residue Lys-141 coordinates 4-amino-2-methyl-5-(diphosphooxymethyl)pyrimidine. Residues Gly-168 and 188-189 (VS) contribute to the 2-[(2R,5Z)-2-carboxy-4-methylthiazol-5(2H)-ylidene]ethyl phosphate site.

This sequence belongs to the thiamine-phosphate synthase family. Mg(2+) serves as cofactor.

It carries out the reaction 2-[(2R,5Z)-2-carboxy-4-methylthiazol-5(2H)-ylidene]ethyl phosphate + 4-amino-2-methyl-5-(diphosphooxymethyl)pyrimidine + 2 H(+) = thiamine phosphate + CO2 + diphosphate. The catalysed reaction is 2-(2-carboxy-4-methylthiazol-5-yl)ethyl phosphate + 4-amino-2-methyl-5-(diphosphooxymethyl)pyrimidine + 2 H(+) = thiamine phosphate + CO2 + diphosphate. It catalyses the reaction 4-methyl-5-(2-phosphooxyethyl)-thiazole + 4-amino-2-methyl-5-(diphosphooxymethyl)pyrimidine + H(+) = thiamine phosphate + diphosphate. It functions in the pathway cofactor biosynthesis; thiamine diphosphate biosynthesis; thiamine phosphate from 4-amino-2-methyl-5-diphosphomethylpyrimidine and 4-methyl-5-(2-phosphoethyl)-thiazole: step 1/1. In terms of biological role, condenses 4-methyl-5-(beta-hydroxyethyl)thiazole monophosphate (THZ-P) and 2-methyl-4-amino-5-hydroxymethyl pyrimidine pyrophosphate (HMP-PP) to form thiamine monophosphate (TMP). The protein is Thiamine-phosphate synthase of Alkaliphilus oremlandii (strain OhILAs) (Clostridium oremlandii (strain OhILAs)).